Here is a 542-residue protein sequence, read N- to C-terminus: Putative inactive cadmium/zinc-transporting ATPase HMA3 (542 aa).

The Cytoplasmic segment spans residues 1-89; sequence MAEGEESKKM…VRPYGETSLK (89 aa). The 67-residue stretch at 13–79 folds into the HMA domain; sequence QTSYFDVVGI…ALNQARLEAS (67 aa). A helical membrane pass occupies residues 90-111; the sequence is SQWPSPFAIVSGVLLVLSFFKY. The Extracellular segment spans residues 112-114; the sequence is FYS. Residues 115–134 traverse the membrane as a helical segment; it reads PLEWLAIVAVVAGVFPILAK. Topologically, residues 135-141 are cytoplasmic; sequence AVASVTR. Residues 142-162 form a helical membrane-spanning segment; it reads FRLDINALTLIAVIATLCMQD. Position 163 (Phe163) is a topological domain, extracellular. A helical membrane pass occupies residues 164–184; sequence TEAATIVFLFSVADWLESSAA. Topologically, residues 185–310 are cytoplasmic; that stretch reads HKASIVMSSL…QTKTQRFIDK (126 aa). Residues 311-333 traverse the membrane as a helical segment; sequence CSRYYTPAVVVSAACFAVIPVLL. The Extracellular segment spans residues 334–341; that stretch reads KVQDLSHW. Residues 342 to 359 form a helical membrane-spanning segment; sequence FHLALVVLVSGCPCGLIL. Residues 360–542 lie on the Cytoplasmic side of the membrane; the sequence is STPVATFCAL…VAQALKELKS (183 aa).

It belongs to the cation transport ATPase (P-type) (TC 3.A.3) family. Type IB subfamily.

It localises to the membrane. The chain is Putative inactive cadmium/zinc-transporting ATPase HMA3 (HMA3) from Arabidopsis thaliana (Mouse-ear cress).